Reading from the N-terminus, the 176-residue chain is MNEVVAKKYVKAILSDVKSNELNAFVENLSELAAAFASDKFKSIISLPTLKASQKVEFVLSLVKNQDAKFANFIKLLGANKRLELIPAILDEMKIEQSLLENTYRGEVVGNFDLSAEQLKALEENFSKKFNSKIKLDGSKSDYNGVKVELDDLGVEVNFSIDRLKSQMSEYILKAI.

This sequence belongs to the ATPase delta chain family. F-type ATPases have 2 components, F(1) - the catalytic core - and F(0) - the membrane proton channel. F(1) has five subunits: alpha(3), beta(3), gamma(1), delta(1), epsilon(1). F(0) has three main subunits: a(1), b(2) and c(10-14). The alpha and beta chains form an alternating ring which encloses part of the gamma chain. F(1) is attached to F(0) by a central stalk formed by the gamma and epsilon chains, while a peripheral stalk is formed by the delta and b chains.

It localises to the cell inner membrane. In terms of biological role, f(1)F(0) ATP synthase produces ATP from ADP in the presence of a proton or sodium gradient. F-type ATPases consist of two structural domains, F(1) containing the extramembraneous catalytic core and F(0) containing the membrane proton channel, linked together by a central stalk and a peripheral stalk. During catalysis, ATP synthesis in the catalytic domain of F(1) is coupled via a rotary mechanism of the central stalk subunits to proton translocation. This protein is part of the stalk that links CF(0) to CF(1). It either transmits conformational changes from CF(0) to CF(1) or is implicated in proton conduction. The protein is ATP synthase subunit delta of Campylobacter concisus (strain 13826).